A 198-amino-acid polypeptide reads, in one-letter code: Cytokinin riboside 5'-monophosphate phosphoribohydrolase (198 aa).

Substrate contacts are provided by residues glutamate 91, 109-110, 126-132, and threonine 138; these read RK and GVGTAEE.

Belongs to the LOG family.

The catalysed reaction is N(6)-(dimethylallyl)adenosine 5'-phosphate + H2O = N(6)-dimethylallyladenine + D-ribose 5-phosphate. It carries out the reaction 9-ribosyl-trans-zeatin 5'-phosphate + H2O = trans-zeatin + D-ribose 5-phosphate. Functionally, catalyzes the hydrolytic removal of ribose 5'-monophosphate from nitrogen N6-modified adenosines, the final step of bioactive cytokinin synthesis. The protein is Cytokinin riboside 5'-monophosphate phosphoribohydrolase (fas6) of Rhodococcoides fascians (Rhodococcus fascians).